The chain runs to 825 residues: NT-3 growth factor receptor (825 aa).

The signal sequence occupies residues 1–31 (MDVSLCPAKCSFWRIFLLGSVWLDYVGSVLA). Cystine bridges form between Cys32–Cys38 and Cys36–Cys45. The Extracellular segment spans residues 32 to 429 (CPANCVCSKT…TVTHKPEEDT (398 aa)). N-linked (GlcNAc...) asparagine glycosylation is found at Asn68, Asn72, and Asn79. LRR repeat units follow at residues 104–125 (GLQK…AFAK) and 128–149 (HLRY…LFQT). N-linked (GlcNAc...) asparagine glycosylation is found at Asn133 and Asn163. The LRRCT domain maps to 160-209 (NFFNCSCDIRWMQLWQEQGEAKLNSQSLYCISADGSQLPLFRMNISQCDL). Intrachain disulfides connect Cys164/Cys189 and Cys166/Cys207. N-linked (GlcNAc...) asparagine glycosylation is found at Asn203, Asn218, Asn232, Asn259, Asn267, Asn272, and Asn294. Ig-like C2-type domains are found at residues 210–300 (PEIS…VALT) and 309–382 (SLEE…NRQE). Cys231 and Cys284 are disulfide-bonded. Cys320 and Cys362 are disulfide-bonded. N-linked (GlcNAc...) asparagine glycans are attached at residues Asn375 and Asn388. A helical membrane pass occupies residues 430–453 (FGVSIAVGLAAFACVLLVVLFIMI). Residues 454-825 (NKYGRRSKFG…ATPIYLDILG (372 aa)) lie on the Cytoplasmic side of the membrane. Tyr516 carries the post-translational modification Phosphotyrosine; by autocatalysis. The Protein kinase domain occupies 538–814 (IVLKRELGEG…EIYKILHALG (277 aa)). ATP contacts are provided by residues 544–552 (LGEGAFGKV) and Lys572. Asp679 acts as the Proton acceptor in catalysis. Phosphotyrosine; by autocatalysis is present on residues Tyr705, Tyr709, Tyr710, and Tyr820.

Belongs to the protein kinase superfamily. Tyr protein kinase family. Insulin receptor subfamily. Exists in a dynamic equilibrium between monomeric (low affinity) and dimeric (high affinity) structures. Binds SH2B2. Interacts with SQSTM1 and KIDINS220. Interacts with PTPRS. Interacts with MAPK8IP3/JIP3. Post-translationally, ligand-mediated auto-phosphorylation. In terms of tissue distribution, preferentially in the brain, low levels in the ovaries.

Its subcellular location is the membrane. The enzyme catalyses L-tyrosyl-[protein] + ATP = O-phospho-L-tyrosyl-[protein] + ADP + H(+). Functionally, receptor tyrosine kinase involved in nervous system and probably heart development. Upon binding of its ligand NTF3/neurotrophin-3, NTRK3 autophosphorylates and activates different signaling pathways, including the phosphatidylinositol 3-kinase/AKT and the MAPK pathways, that control cell survival and differentiation. The polypeptide is NT-3 growth factor receptor (NTRK3) (Sus scrofa (Pig)).